The following is a 199-amino-acid chain: Probable chemoreceptor glutamine deamidase CheD (199 aa).

This sequence belongs to the CheD family.

The catalysed reaction is L-glutaminyl-[protein] + H2O = L-glutamyl-[protein] + NH4(+). In terms of biological role, probably deamidates glutamine residues to glutamate on methyl-accepting chemotaxis receptors (MCPs), playing an important role in chemotaxis. In Cereibacter sphaeroides (strain ATCC 17029 / ATH 2.4.9) (Rhodobacter sphaeroides), this protein is Probable chemoreceptor glutamine deamidase CheD.